We begin with the raw amino-acid sequence, 608 residues long: Glutamine--fructose-6-phosphate aminotransferase [isomerizing] (608 aa).

Residue C2 is the Nucleophile; for GATase activity of the active site. Positions C2 to N217 constitute a Glutamine amidotransferase type-2 domain. SIS domains are found at residues L284–E423 and L456–P598. K603 functions as the For Fru-6P isomerization activity in the catalytic mechanism.

As to quaternary structure, homodimer.

The protein localises to the cytoplasm. It carries out the reaction D-fructose 6-phosphate + L-glutamine = D-glucosamine 6-phosphate + L-glutamate. Catalyzes the first step in hexosamine metabolism, converting fructose-6P into glucosamine-6P using glutamine as a nitrogen source. The sequence is that of Glutamine--fructose-6-phosphate aminotransferase [isomerizing] (glmS) from Bradyrhizobium diazoefficiens (strain JCM 10833 / BCRC 13528 / IAM 13628 / NBRC 14792 / USDA 110).